The primary structure comprises 275 residues: uncharacterized protein (275 aa).

Disordered stretches follow at residues 1–25 and 185–275; these read MIGGERVLLGSQKREPSNEEDDQEQ and QRGE…RHHM. The span at 228-239 shows a compositional bias: basic and acidic residues; that stretch reads KPGDGEENAKDD.

This is an uncharacterized protein from Neurospora crassa (strain ATCC 24698 / 74-OR23-1A / CBS 708.71 / DSM 1257 / FGSC 987).